A 283-amino-acid chain; its full sequence is Cyclic AMP-dependent transcription factor ATF-5 (283 aa).

The segment at 1 to 21 is required for protein stabilization induced by IL1B; that stretch reads MSLLATLGLELDRALLPASGL. At Lys-29 the chain carries N6-acetyllysine; by EP300. 2 disordered regions span residues 118-154 and 168-241; these read DAPLLPPPSPPPPPPPAAAPSLPLPLPLPTFDLPQPP and SEAG…EGEC. The tract at residues 119–218 is interaction with PTP4A1; sequence APLLPPPSPP…GDRKQKKRDQ (100 aa). Composition is skewed to pro residues over residues 121–145 and 183–203; these read LLPPPSPPPPPPPAAAPSLPLPLPL and PQQPPPLAPLPSPARPAPYPS. Residues 209–272 enclose the bZIP domain; sequence GDRKQKKRDQ…QYVKDLLIEV (64 aa). The segment at 211–231 is basic motif; the sequence is RKQKKRDQNKSAALRYRQRKR. The segment at 237-251 is leucine-zipper; the sequence is LEGECQGLEARNREL. Residue Ser-257 is modified to Phosphoserine.

It belongs to the bZIP family. Binds DNA as a dimer. Interacts with PTP4A1/PRL-1. Interacts with CCND3, but not with CCND1 or CCND2. Interacts with HSPA1A or HSPA1B; the interaction protects ATF5 from degradation via proteasome-dependent and caspase-dependent processes. Interacts (via C-terminal region) with NPM1 (via C-terminal region); the interaction leads to loss of association between HSPA1A or HSPA1B and ATF5 and promotes ATF5 degradation via proteasome-dependent and caspase-dependent processes. Interacts with NLK; the interaction stabilizes ATF5 at the protein level in a kinase-independent manner. Interacts with alpha-tubulin, gamma-tubulin members TUBGCP2 and TUBGCP4, PCNT; the ATF5:PCNT:polyglutamylated tubulin (PGT) tripartite unites the mother centriole and the pericentriolar material (PCM) in the centrosome. Interacts with CEBPB and EP300; EP300 is required for ATF5 and CEBPB interaction and DNA binding. In terms of processing, acetylated at Lys-29 by EP300, the acetylation enhances the interaction with CEBPB, DNA-binding and transactivation activity. Post-translationally, ubiquitinated by CDC34 and UBE2B in order to be degraded by the proteasome. Cisplatin inhibits ubiquitination and proteasome-mediated degradation by inhibiting the interaction with CDC34. Ubiquitination and degradation by the proteasome are inhibited by NLK in a kinase-independent manner. Phosphorylated by NLK, probably at Ser-92 and Ser-126. As to expression, highly expressed in liver and at lower levels in heart, brain, lung, kidney, adipose tissue, and skeletal muscle. Expressed in some immature and in all mature olfactory sensory neurons (at protein level).

The protein localises to the cytoplasm. It is found in the nucleus. Its subcellular location is the cytoskeleton. It localises to the microtubule organizing center. The protein resides in the centrosome. Transcription factor that either stimulates or represses gene transcription through binding of different DNA regulatory elements such as cAMP response element (CRE) (consensus: 5'-GTGACGT[AC][AG]-3'), ATF5-specific response element (ARE) (consensus: 5'-C[CT]TCT[CT]CCTT[AT]-3') but also the amino acid response element (AARE), present in many viral and cellular promoters. Critically involved, often in a cell type-dependent manner, in cell survival, proliferation, and differentiation. Its transcriptional activity is enhanced by CCND3 and slightly inhibited by CDK4. Important regulator of the cerebral cortex formation, functions in cerebral cortical neuroprogenitor cells to maintain proliferation and to block differentiation into neurons. Must be down-regulated in order for such cells to exit the cycle and differentiate. Participates in the pathways by which SHH promotes cerebellar granule neuron progenitor cells proliferation. Critical for survival of mature olfactory sensory neurons (OSN), directs expression of OSN-specific genes. May be involved in osteogenic differentiation. Promotes cell proliferation and survival by inducing the expression of EGR1 sinergistically with ELK1. Once acetylated by EP300, binds to ARE sequences on target genes promoters, such as BCL2 and EGR1. Plays an anti-apoptotic role through the transcriptional regulation of BCL2, this function seems to be cell type-dependent. Cooperates with NR1I3/CAR in the transcriptional activation of CYP2B6 in liver. In hepatic cells, represses CRE-dependent transcription and inhibits proliferation by blocking at G2/M phase. May act as a negative regulator of IL1B transduction pathway in liver. Upon IL1B stimulus, cooperates with NLK to activate the transactivation activity of C/EBP subfamily members. Besides its function of transcription factor, acts as a cofactor of CEBPB to activate CEBPA and promote adipocyte differentiation. Regulates centrosome dynamics in a cell-cycle- and centriole-age-dependent manner. Forms 9-foci symmetrical ring scaffold around the mother centriole to control centrosome function and the interaction between centrioles and pericentriolar material. This Mus musculus (Mouse) protein is Cyclic AMP-dependent transcription factor ATF-5 (Atf5).